A 427-amino-acid polypeptide reads, in one-letter code: Glutamate-1-semialdehyde 2,1-aminomutase (427 aa).

Lys265 bears the N6-(pyridoxal phosphate)lysine mark.

Belongs to the class-III pyridoxal-phosphate-dependent aminotransferase family. HemL subfamily. As to quaternary structure, homodimer. It depends on pyridoxal 5'-phosphate as a cofactor.

The protein localises to the cytoplasm. The catalysed reaction is (S)-4-amino-5-oxopentanoate = 5-aminolevulinate. It participates in porphyrin-containing compound metabolism; protoporphyrin-IX biosynthesis; 5-aminolevulinate from L-glutamyl-tRNA(Glu): step 2/2. The protein is Glutamate-1-semialdehyde 2,1-aminomutase of Bordetella pertussis (strain Tohama I / ATCC BAA-589 / NCTC 13251).